A 456-amino-acid chain; its full sequence is Cysteine--tRNA ligase (456 aa).

C30 is a binding site for Zn(2+). The 'HIGH' region signature appears at 32–42 (MTVYDFCHIGH). The Zn(2+) site is built by C211, H236, and E240. A 'KMSKS' region motif is present at residues 268-272 (KMSKS). K271 is an ATP binding site.

This sequence belongs to the class-I aminoacyl-tRNA synthetase family. As to quaternary structure, monomer. Zn(2+) serves as cofactor.

The protein resides in the cytoplasm. It carries out the reaction tRNA(Cys) + L-cysteine + ATP = L-cysteinyl-tRNA(Cys) + AMP + diphosphate. The protein is Cysteine--tRNA ligase of Dichelobacter nodosus (strain VCS1703A).